The chain runs to 249 residues: Very-long-chain (3R)-3-hydroxyacyl-CoA dehydratase 1 (249 aa).

Positions 1–22 are disordered; it reads MASSEEDGTNGGASEAGEEKEA. The Cytoplasmic portion of the chain corresponds to 1–36; that stretch reads MASSEEDGTNGGASEAGEEKEAPGRRRRLGLLATVW. Residues 37–56 traverse the membrane as a helical segment; it reads LTFYNIAMTAGWLVLAIAMV. Over 57–75 the chain is Lumenal; that stretch reads RFYMEKGTHKGLYKSIQKT. A helical transmembrane segment spans residues 76-92; it reads LKFFQTFALLEIVHCLI. Over 93–102 the chain is Cytoplasmic; sequence GIVPTSVIVA. The helical transmembrane segment at 103 to 120 threads the bilayer; that stretch reads GVQVSSRIFMVWLITHSI. Topologically, residues 121-126 are lumenal; it reads KPIQNE. Residues 127–141 traverse the membrane as a helical segment; it reads ESVVLFLVAWTVTEI. Residues 142-164 lie on the Cytoplasmic side of the membrane; the sequence is TRYSFYTFSLLDHLPYFIKWARY. The helical transmembrane segment at 165-182 threads the bilayer; sequence NFFIILYPVGVVGELLTI. Catalysis depends on residues Tyr-171 and Glu-178. The Lumenal portion of the chain corresponds to 183-212; sequence YAALPYVKKTGMFSIRLPNKYNVSFDYYYF. A glycan (N-linked (GlcNAc...) asparagine) is linked at Asn-204. A helical membrane pass occupies residues 213–230; the sequence is LLITMASYIPLFPQLYFH. At 231–249 the chain is on the cytoplasmic side; that stretch reads MLRQRRKVLHGEVIVEKDD.

Belongs to the very long-chain fatty acids dehydratase HACD family. May interact with enzymes of the ELO family (including ELOVL1); with those enzymes that mediate condensation, the first of the four steps of the reaction cycle responsible for fatty acids elongation, may be part of a larger fatty acids elongase complex. Interacts with TECR. In terms of tissue distribution, skeletal muscle.

Its subcellular location is the endoplasmic reticulum membrane. It catalyses the reaction a very-long-chain (3R)-3-hydroxyacyl-CoA = a very-long-chain (2E)-enoyl-CoA + H2O. It carries out the reaction (3R)-hydroxyhexadecanoyl-CoA = (2E)-hexadecenoyl-CoA + H2O. The catalysed reaction is (3R)-hydroxyoctadecanoyl-CoA = (2E)-octadecenoyl-CoA + H2O. The enzyme catalyses (3R)-hydroxyeicosanoyl-CoA = (2E)-eicosenoyl-CoA + H2O. It catalyses the reaction (3R)-hydroxydocosanoyl-CoA = (2E)-docosenoyl-CoA + H2O. It carries out the reaction (3R)-hydroxytetracosanoyl-CoA = (2E)-tetracosenoyl-CoA + H2O. The catalysed reaction is (3R)-hydroxyhexacosanoyl-CoA = (2E)-hexacosenoyl-CoA + H2O. The protein operates within lipid metabolism; fatty acid biosynthesis. Functionally, catalyzes the third of the four reactions of the long-chain fatty acids elongation cycle. This endoplasmic reticulum-bound enzymatic process, allows the addition of two carbons to the chain of long- and very long-chain fatty acids/VLCFAs per cycle. This enzyme catalyzes the dehydration of the 3-hydroxyacyl-CoA intermediate into trans-2,3-enoyl-CoA, within each cycle of fatty acid elongation. Thereby, it participates in the production of VLCFAs of different chain lengths that are involved in multiple biological processes as precursors of membrane lipids and lipid mediators. This chain is Very-long-chain (3R)-3-hydroxyacyl-CoA dehydratase 1 (HACD1), found in Canis lupus familiaris (Dog).